Reading from the N-terminus, the 252-residue chain is Type III pantothenate kinase (252 aa).

6–13 (DIGNTNTV) is an ATP binding site. Position 105–108 (105–108 (GADR)) interacts with substrate. Catalysis depends on Asp-107, which acts as the Proton acceptor. K(+) is bound at residue Asp-127. Thr-130 contacts ATP. Substrate is bound at residue Thr-182.

The protein belongs to the type III pantothenate kinase family. Homodimer. NH4(+) is required as a cofactor. K(+) serves as cofactor.

The protein resides in the cytoplasm. It carries out the reaction (R)-pantothenate + ATP = (R)-4'-phosphopantothenate + ADP + H(+). It participates in cofactor biosynthesis; coenzyme A biosynthesis; CoA from (R)-pantothenate: step 1/5. Its function is as follows. Catalyzes the phosphorylation of pantothenate (Pan), the first step in CoA biosynthesis. In Salinispora arenicola (strain CNS-205), this protein is Type III pantothenate kinase.